A 380-amino-acid chain; its full sequence is uncharacterized protein (380 aa).

Positions 1–18 (MALRHLALLAGLLVGVAS) are cleaved as a signal peptide. Asn104, Asn111, and Asn128 each carry an N-linked (GlcNAc...) asparagine glycan. A helical transmembrane segment spans residues 148-168 (LFLGTFFISSGLILSVAGFFY). Disordered stretches follow at residues 229–256 (PQTG…QGQG) and 336–380 (RFSG…ISNV). Pro residues predominate over residues 240-249 (PPLPGSPGDP). Residues 356–366 (VRRERPLDRAT) are compositionally biased toward basic and acidic residues.

The protein resides in the membrane. This is an uncharacterized protein from Homo sapiens (Human).